Reading from the N-terminus, the 1943-residue chain is MFLQFAVWKCLPHGILIASLLVVSWGQYDDDWQYEDCKLARGGPPATIVAIDEESRNGTILVDNMLIKGTAGGPDPTIELSLKDNVDYWVLLDPVKQMLFLNSTGRVLDRDPPMNIHSIVVQVQCVNKKVGTVIYHEVRIVVRDRNDNSPTFKHESYYATVNELTPVGTTIFTGFSGDNGATDIDDGPNGQIEYVIQYNPEDPTSNDTFEIPLMLTGNVVLRKRLNYEDKTRYYVIIQANDRAQNLNERRTTTTTLTVDVLDGDDLGPMFLPCVLVPNTRDCRPLTYQAAIPELRTPEELNPILVTPPIQAIDQDRNIQPPSDRPGILYSILVGTPEDYPRFFHMHPRTAELTLLEPVNRDFHQKFDLVIKAEQDNGHPLPAFASLHIEILDENNQSPYFTMPSYQGYILESAPVGATISESLNLTTPLRIVALDKDIEDTKDPELHLFLNDYTSVFTVTPTGITRYLTLLQPVDREEQQTYTFLITAFDGVQESEPVVVNIRVMDANDNTPTFPEISYDVYVYTDMSPGDSVIQLTAVDADEGSNGEISYEILVGGKGDFVINKTTGLVSIAPGVELIVGQTYALTVQASDNAPPAERRHSICTVYIEVLPPNNQSPPRFPQLMYSLEVSEAMRIGAILLNLQATDREGDPITYAIENGDPQRVFNLSETTGILSLGKALDRESTDRYILIVTASDGRPDGTSTATVNIVVTDVNDNAPVFDPYLPRNLSVVEEEANAFVGQVRATDPDAGINGQVHYSLGNFNNLFRITSNGSIYTAVKLNREARDHYELVVVATDGAVHPRHSTLTLYIKVLDIDDNSPVFTNSTYTVVVEENLPAGTSFLQIEAKDVDLGANVSYRIRSPEVKHLFALHPFTGELSLLRSLDYEAFPDQEASITFLVEAFDIYGTMPPGIATVTVIVKDMNDYPPVFSKRIYKGMVAPDAVKGTPITTVYAEDADPPGMPASRVRYRVDDVQFPYPASIFDVEEDSGRVVTRVNLNEEPTTIFKLVVVAFDDGEPVMSSSATVRILVLHPGEIPRFTQEEYRPPPVSELAARGTVVGVISAAAINQSIVYSIVAGNEEDKFGINNVTGVIYVNSPLDYETRTSYVLRVQADSLEVVLANLRVPSKSNTAKVYIEIQDENDHPPVFQKKFYIGGVSEDARMFASVLRVKATDRDTGNYSAMAYRLIIPPIKEGKEGFVVETYTGLIKTAMLFHNMRRSYFKFQVIATDDYGKGLSGKADVLVSVVNQLDMQVIVSNVPPTLVEKKIEDLTEILDRYVQEQIPGAKVVVESIGARRHGDAYSLEDYSKCDLTVYAIDPQTNRAIDRNELFKFLDGKLLDINKDFQPYYGEGGRILEIRTPEAVTSIKKRGESLGYTEGALLALAFIIILCCIPAILVVLVSYRQFKVRQAECTKTARIQSAMPAAKPAAPVPAAPAPPPPPPPPPPGAHLYEELGESAMHNLFLLYHFEQSRGNNSVPEDRSSHRDGMAFSSSTTESHEPAHVEGPLKESQPNPARTFSFVPDEDNLSTHNPLYMESIGQRSTNSDLQPRTDFEELLAPRTQVKSQSLRGPREKIQRVWNQSVSFPRRLMWKAPNRPETIDLVEWQITNQRAECESARCHPSQRGSSNVLLATEDAHESEKEGGHRDTLIVQQTEQLKSLSSGSSFSSSWSHFSFSTLPTISRAVELGSEPNVVTSPADCTLELSPPLRPRILNSLSSKRETPTCASDTEPKRNSFEIAPHPPSISAPLPHPPLPRPPIAFTTFPLPLSPPNPPPPQLVTFSLPISTPPTSSLPLPPPLSLPPPPRPPAPRLFPQPPSTSIPSTDSISAPAAKCTASATHARETTSTTQPPASNPQWGAEPHRHPKGILRHVKNLAELEKSVSNMYSHIEKNCPPADPSKLHTFCPAEKTGMKITHDQSQETLVRVVEGIDVQPHSQSTSL.

The signal sequence occupies residues 1-26 (MFLQFAVWKCLPHGILIASLLVVSWG). Over 27 to 1381 (QYDDDWQYED…GESLGYTEGA (1355 aa)) the chain is Extracellular. A disulfide bridge links C37 with C125. Cadherin domains are found at residues 45 to 152 (PATI…SPTF), 153 to 270 (KHES…GPMF), 283 to 400 (RPLT…SPYF), 401 to 514 (TMPS…TPTF), 515 to 621 (PEIS…PPRF), 622 to 722 (PQLM…APVF), 724 to 824 (PYLP…SPVF), 825 to 931 (TNST…PPVF), 932 to 1040 (SKRI…IPRF), 1042 to 1149 (QEEY…PPVF), and 1150 to 1264 (QKKF…PPTL). Residues N57, N102, and N206 are each glycosylated (N-linked (GlcNAc...) asparagine). Residues N424, N564, N667, N729, N773, N826, and N856 are each glycosylated (N-linked (GlcNAc...) asparagine). Residues N1069, N1089, and N1180 are each glycosylated (N-linked (GlcNAc...) asparagine). A helical transmembrane segment spans residues 1382–1402 (LLALAFIIILCCIPAILVVLV). Topologically, residues 1403 to 1943 (SYRQFKVRQA…VQPHSQSTSL (541 aa)) are cytoplasmic. Disordered regions lie at residues 1425-1453 (PAAK…AHLY), 1475-1533 (GNNS…STHN), and 1714-1865 (ILNS…EPHR). The segment covering 1431 to 1449 (APVPAAPAPPPPPPPPPPG) has biased composition (pro residues). Composition is skewed to basic and acidic residues over residues 1480–1489 (PEDRSSHRDG) and 1498–1509 (ESHEPAHVEGPL). Composition is skewed to pro residues over residues 1742 to 1760 (PHPP…PRPP) and 1769 to 1779 (PLSPPNPPPPQ). Over residues 1784 to 1795 (SLPISTPPTSSL) the composition is skewed to low complexity. A compositionally biased stretch (pro residues) spans 1796 to 1821 (PLPPPLSLPPPPRPPAPRLFPQPPST). Residues 1822-1834 (SIPSTDSISAPAA) are compositionally biased toward low complexity. The segment covering 1846–1858 (TTSTTQPPASNPQ) has biased composition (polar residues).

As to quaternary structure, antiparallel heterodimer with CDH23. Found in a complex with TMIE and LHFPL5. Interacts with LHFPL5/TMHS; this interaction is required for efficient localization to hair bundles. Interacts with MYO7A. Interacts with USH1G; this interaction may recruit USH1G to the plasma membrane. Interacts with TOMT. Isoforms CD1 and CD3 interact with TMC1 (via N-terminus) and TMC2 (via N-terminus). Interacts with PIEZO1. As to expression, expressed in brain and sensory epithelium of the developing inner ear. Expressed in the retina, in the photoreceptor inner segments, the outer plexiform layer, the inner nuclei layer and the ganglion cell layer and, more diffusely in the inner plexiform layer (at protein level). Not detected in the retinal pigment epithelium (at protein level). Expressed in the spleen, dorsal root ganglion, dorsal aspect of neural tube, floor plate and ependymal cells adjacent to the neural canal.

It is found in the cell membrane. The protein resides in the secreted. Its function is as follows. Calcium-dependent cell-adhesion protein. Required for inner ear neuroepithelial cell elaboration and cochlear function. Probably involved in the maintenance of normal retinal function. This is Protocadherin-15 (Pcdh15) from Mus musculus (Mouse).